A 498-amino-acid polypeptide reads, in one-letter code: 3-octaprenyl-4-hydroxybenzoate carboxy-lyase (498 aa).

Asparagine 175 is a binding site for Mn(2+). Prenylated FMN contacts are provided by residues 178-180, 192-194, and 197-198; these read IYR, RWL, and RG. Mn(2+) is bound at residue glutamate 241. The Proton donor role is filled by aspartate 290.

Belongs to the UbiD family. In terms of assembly, homohexamer. Requires prenylated FMN as cofactor. Mn(2+) serves as cofactor.

The protein resides in the cell membrane. It catalyses the reaction a 4-hydroxy-3-(all-trans-polyprenyl)benzoate + H(+) = a 2-(all-trans-polyprenyl)phenol + CO2. It participates in cofactor biosynthesis; ubiquinone biosynthesis. Its function is as follows. Catalyzes the decarboxylation of 3-octaprenyl-4-hydroxy benzoate to 2-octaprenylphenol, an intermediate step in ubiquinone biosynthesis. The chain is 3-octaprenyl-4-hydroxybenzoate carboxy-lyase from Pectobacterium atrosepticum (strain SCRI 1043 / ATCC BAA-672) (Erwinia carotovora subsp. atroseptica).